The sequence spans 358 residues: Envelope glycoprotein K (358 aa).

The signal sequence occupies residues 1–33 (MSRVQCLRLAAVIASISHLIFLVWFVCWNSVLE). Over 34 to 141 (NNEDCVYATR…LEMADCMAYL (108 aa)) the chain is Extracellular. 2 N-linked (GlcNAc...) asparagine; by host glycosylation sites follow: Asn-57 and Asn-80. Residues 142-162 (WFFQVRTATAALLMYLAFLCV) form a helical membrane-spanning segment. Residues 163-235 (NRQRRGFGPW…DTLGFYLMHP (73 aa)) lie on the Cytoplasmic side of the membrane. The helical transmembrane segment at 236–256 (LALLLRAIETILYFASLVASA) threads the bilayer. At 257–273 (TVLRVNFDPCSVVLPNH) the chain is on the extracellular side. The chain crosses the membrane as a helical span at residues 274 to 294 (VKVFAWVFVAALGALEVVSAI). Residues 295–323 (DHLRRETRSARDAAAVIRPTNIIAACCAN) are Cytoplasmic-facing. Residues 324-344 (IISHVLLRMLYGAALVLVVIG) traverse the membrane as a helical segment. Topologically, residues 345-358 (ALKYEREIQTRLLG) are extracellular.

Belongs to the alphaherpesvirinae glycoprotein K family. As to quaternary structure, interacts (via UL20 interaction region) with protein UL20 (via N-terminus); this interaction probably plays a role in the coordinate transport of protein UL20 and gK to the trans-Golgi network (TGN), and is required for the cell surface expression of gK.

It localises to the host cell membrane. Its subcellular location is the host endosome membrane. It is found in the host Golgi apparatus membrane. In terms of biological role, glycoprotein that probably modulates membrane fusion events during secondary envelopment of cytoplasmic capsids that bud into specific trans-Golgi network (TGN)-derived membranes. Also plays a role, together with gB, in virus-induced cell-to-cell fusion (syncytia formation). Seems to block fusion of virions with infected-cell membranes. This Psittacid herpesvirus 1 (isolate Amazon parrot/-/97-0001/1997) (PsHV-1) protein is Envelope glycoprotein K (gK).